A 90-amino-acid polypeptide reads, in one-letter code: MALVRSLLVAKKILSRSAAAVSAPPKGFLAVYVGESQKKRYLVPLSYLNQPSFQALLSKSEEEFGFDHPMGGLTIPCPEDTFINVTSRLH.

It belongs to the ARG7 family.

It localises to the cell membrane. In terms of biological role, functions as a positive effector of cell expansion through modulation of auxin transport. This Arabidopsis thaliana (Mouse-ear cress) protein is Auxin-responsive protein SAUR23.